A 283-amino-acid polypeptide reads, in one-letter code: MTARIIDGAALSQRIREEVAQRVQALTAKGVRPGLAVVLVGDDPASQVYVRNKVAACEKAGLHSVKEQYPADLTEAQLLERIDALNRDPSIHGILVQLPLPRHMDAHKVIEAIAAEKDVDGFHISNAGLLMTGQPLFRPCTPYGVMKMLESEGVALRGAEAVIVGASNIVGKPMAMLLLQAGATITICNSKTRDLGAQTRRADVLVVATGKPGMIDGSMIKPGAVVIDVGINRGADGKLCGDVDMASAREVAGAISPVPGGVGPMTIAMLLVNTVEAAERAAA.

NADP(+) contacts are provided by residues 165–167 (GAS), serine 190, and isoleucine 231.

Belongs to the tetrahydrofolate dehydrogenase/cyclohydrolase family. In terms of assembly, homodimer.

It carries out the reaction (6R)-5,10-methylene-5,6,7,8-tetrahydrofolate + NADP(+) = (6R)-5,10-methenyltetrahydrofolate + NADPH. It catalyses the reaction (6R)-5,10-methenyltetrahydrofolate + H2O = (6R)-10-formyltetrahydrofolate + H(+). Its pathway is one-carbon metabolism; tetrahydrofolate interconversion. Its function is as follows. Catalyzes the oxidation of 5,10-methylenetetrahydrofolate to 5,10-methenyltetrahydrofolate and then the hydrolysis of 5,10-methenyltetrahydrofolate to 10-formyltetrahydrofolate. In Bordetella bronchiseptica (strain ATCC BAA-588 / NCTC 13252 / RB50) (Alcaligenes bronchisepticus), this protein is Bifunctional protein FolD.